Here is a 100-residue protein sequence, read N- to C-terminus: NADH-quinone oxidoreductase subunit K (100 aa).

Transmembrane regions (helical) follow at residues 4 to 24 (LFHG…SLIV), 28 to 48 (ILFM…ALVV), and 60 to 80 (IMYI…LALL).

This sequence belongs to the complex I subunit 4L family. In terms of assembly, NDH-1 is composed of 13 different subunits. Subunits NuoA, H, J, K, L, M, N constitute the membrane sector of the complex.

The protein localises to the cell membrane. The catalysed reaction is a quinone + NADH + 5 H(+)(in) = a quinol + NAD(+) + 4 H(+)(out). In terms of biological role, NDH-1 shuttles electrons from NADH, via FMN and iron-sulfur (Fe-S) centers, to quinones in the respiratory chain. The immediate electron acceptor for the enzyme in this species is believed to be ubiquinone. Couples the redox reaction to proton translocation (for every two electrons transferred, four hydrogen ions are translocated across the cytoplasmic membrane), and thus conserves the redox energy in a proton gradient. In Buchnera aphidicola subsp. Schizaphis graminum (strain Sg), this protein is NADH-quinone oxidoreductase subunit K.